We begin with the raw amino-acid sequence, 359 residues long: Phospho-N-acetylmuramoyl-pentapeptide-transferase (359 aa).

The next 10 membrane-spanning stretches (helical) occupy residues 3–23 (QILI…PALI), 55–75 (VAII…GLAF), 80–100 (ISAS…VGFL), 117–137 (TAKT…ALGF), 156–176 (IATV…VVSA), 187–207 (LDGL…LITF), 231–251 (LAIV…WNAA), 255–275 (IFMG…ISVT), 280–300 (ILAV…VLQI), and 334–354 (FWLL…GEWL).

The protein belongs to the glycosyltransferase 4 family. MraY subfamily. The cofactor is Mg(2+).

It is found in the cell membrane. It catalyses the reaction UDP-N-acetyl-alpha-D-muramoyl-L-alanyl-gamma-D-glutamyl-meso-2,6-diaminopimeloyl-D-alanyl-D-alanine + di-trans,octa-cis-undecaprenyl phosphate = di-trans,octa-cis-undecaprenyl diphospho-N-acetyl-alpha-D-muramoyl-L-alanyl-D-glutamyl-meso-2,6-diaminopimeloyl-D-alanyl-D-alanine + UMP. It functions in the pathway cell wall biogenesis; peptidoglycan biosynthesis. Functionally, catalyzes the initial step of the lipid cycle reactions in the biosynthesis of the cell wall peptidoglycan: transfers peptidoglycan precursor phospho-MurNAc-pentapeptide from UDP-MurNAc-pentapeptide onto the lipid carrier undecaprenyl phosphate, yielding undecaprenyl-pyrophosphoryl-MurNAc-pentapeptide, known as lipid I. This Mycolicibacterium paratuberculosis (strain ATCC BAA-968 / K-10) (Mycobacterium paratuberculosis) protein is Phospho-N-acetylmuramoyl-pentapeptide-transferase.